We begin with the raw amino-acid sequence, 2193 residues long: Non-reducing polyketide synthase esdpA (2193 aa).

In terms of domain architecture, Starter acyltransferase (SAT) spans 90–252 (NVLLAPLTVL…AKVQVNGRYH (163 aa)). In terms of domain architecture, Ketosynthase family 3 (KS3) spans 381–797 (DECVAIVGAA…GNNTVIIVCE (417 aa)). Residues cysteine 546, histidine 682, and histidine 720 each act as for beta-ketoacyl synthase activity in the active site. One can recognise a Malonyl-CoA:ACP transacylase (MAT) domain in the interval 906–1158 (VFSGQSGMTV…YFVDAVRRIK (253 aa)). Catalysis depends on serine 992, which acts as the For acyl/malonyl transferase activity. An N-terminal hotdog fold region spans residues 1265-1392 (PPMLSLENFS…GRVVLEDRRR (128 aa)). Residues 1265–1569 (PPMLSLENFS…FVKISSHILQ (305 aa)) enclose the PKS/mFAS DH domain. Residues 1419–1569 (VFSASGSIAY…FVKISSHILQ (151 aa)) are C-terminal hotdog fold. The active-site Proton donor; for dehydratase activity is aspartate 1479. Residues 1723–1799 (RILSDSMIKL…ELHDLMQSHP (77 aa)) form the Carrier domain. Serine 1759 carries the post-translational modification O-(pantetheine 4'-phosphoryl)serine. The interval 1944 to 2177 (YHGSEHKLLR…GFTHVDWSND (234 aa)) is methyltransferase (CMeT) domain.

Pantetheine 4'-phosphate serves as cofactor.

It functions in the pathway secondary metabolite biosynthesis; terpenoid biosynthesis. Its function is as follows. Non-reducing polyketide synthase; part of the cluster that mediates the biosynthesis of shearones, diterpenoid pyrones (DPs) which are structurally diverse meroterpenoids consisting of a diterpene linked by a pyrone, and which may exhibit a range of bioactivities. Whitin the pathway, esdpA takes part to the biosynthesis of the molecular scaffold via the production of the alpha-pyrone from one molecule of acetyl-CoA, two molecules of malonyl-CoA and one molecule of S-adenosyl-L-methionine (SAM). The molecular scaffold is commonly biosynthesized by a series of enzymes including the non-reducing polyketide synthase (NR-PKS) esdpA that generates an alpha-pyrone; the prenyltransferase esdpC that attaches a geranylgeranyl pyrophosphate (GGPP) produced by the GGPP synthase (GGPPS) esdpD onto the pyrone unit; the FAD-dependent monooxygenase esdpE that converts an olefin on the diterpene unit into an epoxide; and the terpene cyclase esdpB that catalyzes the cyclization reactions to give the molecular backbone shearone A. In the modification steps, esdpF oxidizes the hydroxy group to a ketone at C-3 and esdpG then attaches hydroxy groups at both C-11 and C-12. After that, esdpI hydroxylates at C-20 and esdpH hydroxylates at C-6'. The ether bridge is generated by nucleophilic attack of the hydroxy group at C-20 to the carbonyl carbon at C-3. EsdpH can also functions prior to esdpI. The different combinations of these modification enzymes lead to the production of diverse shearone derivatives, shearone I being the end product of the pathway. The alpha-ketoglutarate-dependent dioxygenase esdpJ seems not to be involved in this pathway. This chain is Non-reducing polyketide synthase esdpA, found in Penicillium shearii (Eupenicillium shearii).